Consider the following 178-residue polypeptide: Protein GrpE (178 aa).

Over residues 1-11 (MENTQENPTDQ) the composition is skewed to polar residues. The tract at residues 1–31 (MENTQENPTDQTTEETGREAQAAENAAPAAE) is disordered. A compositionally biased stretch (low complexity) spans 19 to 31 (EAQAAENAAPAAE).

Belongs to the GrpE family. Homodimer.

It is found in the cytoplasm. In terms of biological role, participates actively in the response to hyperosmotic and heat shock by preventing the aggregation of stress-denatured proteins, in association with DnaK and GrpE. It is the nucleotide exchange factor for DnaK and may function as a thermosensor. Unfolded proteins bind initially to DnaJ; upon interaction with the DnaJ-bound protein, DnaK hydrolyzes its bound ATP, resulting in the formation of a stable complex. GrpE releases ADP from DnaK; ATP binding to DnaK triggers the release of the substrate protein, thus completing the reaction cycle. Several rounds of ATP-dependent interactions between DnaJ, DnaK and GrpE are required for fully efficient folding. The polypeptide is Protein GrpE (Burkholderia thailandensis (strain ATCC 700388 / DSM 13276 / CCUG 48851 / CIP 106301 / E264)).